A 351-amino-acid chain; its full sequence is Ribosomal RNA large subunit methyltransferase M (351 aa).

Residues Ser183, 216–219, Asp235, Asp255, and Asp271 each bind S-adenosyl-L-methionine; that span reads APGG. Catalysis depends on Lys300, which acts as the Proton acceptor.

The protein belongs to the class I-like SAM-binding methyltransferase superfamily. RNA methyltransferase RlmE family. RlmM subfamily. As to quaternary structure, monomer.

Its subcellular location is the cytoplasm. It carries out the reaction cytidine(2498) in 23S rRNA + S-adenosyl-L-methionine = 2'-O-methylcytidine(2498) in 23S rRNA + S-adenosyl-L-homocysteine + H(+). Functionally, catalyzes the 2'-O-methylation at nucleotide C2498 in 23S rRNA. This chain is Ribosomal RNA large subunit methyltransferase M, found in Ectopseudomonas mendocina (strain ymp) (Pseudomonas mendocina).